The primary structure comprises 690 residues: Proprotein convertase subtilisin/kexin type 9 (690 aa).

A signal peptide spans 1-28 (MGTVRSRRLWWPLPLLLLLLRGPAGARA). The propeptide occupies 29-150 (QEDDDGDYEE…IEEDSYVFAQ (122 aa)). Tyr-36 is subject to Sulfotyrosine. Phosphoserine is present on Ser-45. Positions 75–147 (TYVVVLKEET…VDYIEEDSYV (73 aa)) constitute an Inhibitor I9 domain. The Peptidase S8 domain occupies 153-459 (PWNLERITPA…GWQLFCRTVW (307 aa)). Catalysis depends on charge relay system residues Asp-184 and His-224. Disulfide bonds link Cys-221–Cys-253 and Cys-321–Cys-356. Catalysis depends on Ser-384, which acts as the Charge relay system. The interval 448-690 (GAGWQLFCRT…HLAQASQELQ (243 aa)) is C-terminal domain. Intrachain disulfides connect Cys-455–Cys-525, Cys-475–Cys-524, and Cys-484–Cys-507. An N-linked (GlcNAc...) asparagine glycan is attached at Asn-531. Disulfide bonds link Cys-532–Cys-599, Cys-550–Cys-598, Cys-560–Cys-586, Cys-606–Cys-677, Cys-624–Cys-676, and Cys-633–Cys-652. Ser-686 carries the post-translational modification Phosphoserine.

Belongs to the peptidase S8 family. As to quaternary structure, monomer. Can self-associate to form dimers and higher multimers which may have increased LDLR degrading activity. The precursor protein but not the mature protein may form multimers. Interacts with APOB, VLDLR, LRP8/APOER2 and BACE1. The full-length immature form (pro-PCSK9) interacts with SCNN1A, SCNN1B and SCNN1G. The pro-PCSK9 form (via C-terminal domain) interacts with LDLR. Interacts (via the C-terminal domain) with ANXA2 (via repeat Annexin 1); the interaction inhibits the degradation of LDLR. The cofactor is Ca(2+). Post-translationally, cleavage by furin and PCSK5 generates a truncated inactive protein that is unable to induce LDLR degradation. In terms of processing, undergoes autocatalytic cleavage in the endoplasmic reticulum to release the propeptide from the N-terminus and the cleavage of the propeptide is strictly required for its maturation and activation. The cleaved propeptide however remains associated with the catalytic domain through non-covalent interactions, preventing potential substrates from accessing its active site. As a result, it is secreted from cells as a propeptide-containing, enzymatically inactive protein. Phosphorylation protects the propeptide against proteolysis.

The protein localises to the cytoplasm. Its subcellular location is the secreted. It localises to the endosome. The protein resides in the lysosome. It is found in the cell surface. The protein localises to the endoplasmic reticulum. Its subcellular location is the golgi apparatus. Its activity is regulated as follows. Its proteolytic activity is autoinhibited by the non-covalent binding of the propeptide to the catalytic domain. Inhibited by EGTA. Crucial player in the regulation of plasma cholesterol homeostasis. Binds to low-density lipid receptor family members: low density lipoprotein receptor (LDLR), very low density lipoprotein receptor (VLDLR), apolipoprotein E receptor (LRP1/APOER) and apolipoprotein receptor 2 (LRP8/APOER2), and promotes their degradation in intracellular acidic compartments. Acts via a non-proteolytic mechanism to enhance the degradation of the hepatic LDLR through a clathrin LDLRAP1/ARH-mediated pathway. May prevent the recycling of LDLR from endosomes to the cell surface or direct it to lysosomes for degradation. Can induce ubiquitination of LDLR leading to its subsequent degradation. Inhibits intracellular degradation of APOB via the autophagosome/lysosome pathway in a LDLR-independent manner. Involved in the disposal of non-acetylated intermediates of BACE1 in the early secretory pathway. Inhibits epithelial Na(+) channel (ENaC)-mediated Na(+) absorption by reducing ENaC surface expression primarily by increasing its proteasomal degradation. Regulates neuronal apoptosis via modulation of LRP8/APOER2 levels and related anti-apoptotic signaling pathways. The polypeptide is Proprotein convertase subtilisin/kexin type 9 (PCSK9) (Ateles geoffroyi (Black-handed spider monkey)).